The sequence spans 1501 residues: 1-phosphatidylinositol 4,5-bisphosphate phosphodiesterase eta-2 (1501 aa).

The disordered stretch occupies residues 28–47 (RGFSGLQGGRRRGRGEKGIP). The tract at residues 75 to 229 (MPGPQPSAAS…WVTGLRYLMA (155 aa)) is necessary for plasma membrane localization. One can recognise a PH domain in the interval 121 to 229 (SAMQEGTQMV…WVTGLRYLMA (109 aa)). EF-hand domains lie at 243 to 278 (TRDQ…LNVN) and 279 to 315 (LPRQ…MSTR). Positions 256, 258, 260, 262, and 267 each coordinate Ca(2+). Residues 400-545 (QDMTQPLSHY…LKGKILVKGK (146 aa)) form the PI-PLC X-box domain. The active site involves histidine 415. Residues asparagine 416, glutamate 445, and aspartate 447 each coordinate Ca(2+). The active site involves histidine 459. Glutamate 494 contacts Ca(2+). Lysine 543 and lysine 545 together coordinate substrate. Disordered stretches follow at residues 551–570 (ISED…DEME) and 609–700 (DPND…QKKT). Positions 553 to 570 (EDAEEGEVSDEDSADEME) are enriched in acidic residues. Residues serine 561 and serine 565 each carry the phosphoserine modification. Residues 626–638 (RKAEAKKGQSKVE) show a composition bias toward basic and acidic residues. The segment covering 662–673 (SKRKKKGSKIKK) has biased composition (basic residues). A phosphoserine mark is found at serine 676 and serine 686. A PI-PLC Y-box domain is found at 707–821 (LSDLVKYTKS…GYVLKPQCMC (115 aa)). Residues serine 734 and arginine 761 each contribute to the substrate site. The 130-residue stretch at 821–950 (CQGVFNPNSE…PGYRHVYLEG (130 aa)) folds into the C2 domain. 6 residues coordinate Ca(2+): isoleucine 865, aspartate 867, aspartate 891, aspartate 920, histidine 921, and aspartate 922. 4 disordered regions span residues 986–1073 (GSLD…RLFP), 1089–1238 (EEPA…SSND), 1273–1305 (SAAR…DELQ), and 1398–1469 (GDIT…GACS). The span at 1089–1107 (EEPALGPGLPLQAAAPTGP) shows a compositional bias: low complexity. 2 stretches are compositionally biased toward basic and acidic residues: residues 1142-1151 (GGRENEEPPL) and 1215-1227 (LWQR…HRDS). A compositionally biased stretch (low complexity) spans 1421–1439 (RRSSSRSQSRVRAIASRAR). Positions 1440–1463 (QAQERQQRLRGQDSRGPPEEERGT) are enriched in basic and acidic residues.

Ca(2+) is required as a cofactor. As to expression, specifically detected in the brain, with higher level in cerebral cortex, olfactory bulb and hippocampus (at protein level). Expressed in the pyramidal cells of the hippocampus, but also in eye and lung.

The protein resides in the cytoplasm. Its subcellular location is the cell membrane. It catalyses the reaction a 1,2-diacyl-sn-glycero-3-phospho-(1D-myo-inositol-4,5-bisphosphate) + H2O = 1D-myo-inositol 1,4,5-trisphosphate + a 1,2-diacyl-sn-glycerol + H(+). With respect to regulation, activity is stimulated by GNB1:GNG2. In terms of biological role, the production of the second messenger molecules diacylglycerol (DAG) and inositol 1,4,5-trisphosphate (IP3) is mediated by activated phosphatidylinositol-specific phospholipase C enzymes. This phospholipase activity is very sensitive to calcium. May be important for formation and maintenance of the neuronal network in the postnatal brain. The polypeptide is 1-phosphatidylinositol 4,5-bisphosphate phosphodiesterase eta-2 (Mus musculus (Mouse)).